We begin with the raw amino-acid sequence, 103 residues long: MELIEQVAVAKKANIYFEGKVASRSVFFSDGSKQTLGVVLPGEYEFSTSQGEIMHVTSGSFEVLLPNSSTWQAFSEGSQFELAANVSFKIRNNAIAEYCCRYL.

It belongs to the nucleoside phosphorylase PpnP family.

It catalyses the reaction a purine D-ribonucleoside + phosphate = a purine nucleobase + alpha-D-ribose 1-phosphate. The enzyme catalyses adenosine + phosphate = alpha-D-ribose 1-phosphate + adenine. The catalysed reaction is cytidine + phosphate = cytosine + alpha-D-ribose 1-phosphate. It carries out the reaction guanosine + phosphate = alpha-D-ribose 1-phosphate + guanine. It catalyses the reaction inosine + phosphate = alpha-D-ribose 1-phosphate + hypoxanthine. The enzyme catalyses thymidine + phosphate = 2-deoxy-alpha-D-ribose 1-phosphate + thymine. The catalysed reaction is uridine + phosphate = alpha-D-ribose 1-phosphate + uracil. It carries out the reaction xanthosine + phosphate = alpha-D-ribose 1-phosphate + xanthine. Its function is as follows. Catalyzes the phosphorolysis of diverse nucleosides, yielding D-ribose 1-phosphate and the respective free bases. Can use uridine, adenosine, guanosine, cytidine, thymidine, inosine and xanthosine as substrates. Also catalyzes the reverse reactions. In Shewanella oneidensis (strain ATCC 700550 / JCM 31522 / CIP 106686 / LMG 19005 / NCIMB 14063 / MR-1), this protein is Pyrimidine/purine nucleoside phosphorylase.